The following is a 529-amino-acid chain: Tyrosinase (529 aa).

The first 18 residues, 1-18 (MLLAALCCLLWSFRTSAG), serve as a signal peptide directing secretion. Topologically, residues 19–472 (HFPRACASSK…IKPFLEQASR (454 aa)) are lumenal. N-linked (GlcNAc...) asparagine glycans are attached at residues asparagine 86, asparagine 111, and asparagine 161. Cu cation-binding residues include histidine 180, histidine 202, and histidine 211. N-linked (GlcNAc...) asparagine glycosylation is found at asparagine 230 and asparagine 336. Cu cation-binding residues include histidine 362 and histidine 366. N-linked (GlcNAc...) asparagine glycosylation occurs at asparagine 370. Histidine 389 lines the Cu cation pocket. A helical transmembrane segment spans residues 473-495 (IWPWLIGAAVVGSVLTAVLGRLT). Over 496-529 (SLLCRRKRKQLREERQPLLMEKEDYHSLLYQTHV) the chain is Cytoplasmic.

The protein belongs to the tyrosinase family. As to quaternary structure, forms an OPN3-dependent complex with DCT in response to blue light in melanocytes. Requires Cu(2+) as cofactor. Glycosylated.

It is found in the melanosome membrane. The protein resides in the melanosome. The enzyme catalyses 2 L-dopa + O2 = 2 L-dopaquinone + 2 H2O. The catalysed reaction is L-tyrosine + O2 = L-dopaquinone + H2O. It carries out the reaction 2 5,6-dihydroxyindole-2-carboxylate + O2 = 2 indole-5,6-quinone-2-carboxylate + 2 H2O. Functionally, this is a copper-containing oxidase that functions in the formation of pigments such as melanins and other polyphenolic compounds. Catalyzes the initial and rate limiting step in the cascade of reactions leading to melanin production from tyrosine. In addition to hydroxylating tyrosine to DOPA (3,4-dihydroxyphenylalanine), also catalyzes the oxidation of DOPA to DOPA-quinone, and possibly the oxidation of DHI (5,6-dihydroxyindole) to indole-5,6 quinone. In Felis catus (Cat), this protein is Tyrosinase (TYR).